The chain runs to 132 residues: Transcriptional repressor SmtB homolog (132 aa).

The Zn(2+) site is built by Cys-20, His-26, Cys-71, Cys-73, Asp-114, His-116, His-127, and Glu-130. In terms of domain architecture, HTH arsR-type spans 38–132; the sequence is MSLDQAQQMA…EVADHLQESD (95 aa). Residues 72 to 91 constitute a DNA-binding region (H-T-H motif); it reads VCDLAAAMKVSESAVSHQLR.

Homodimer.

Transcriptional repressor of the expression of the ziaA gene. Controls zinc homeostasis by triggering ZiaA-mediated efflux of excess zinc into the periplasm. This is Transcriptional repressor SmtB homolog (ziaR) from Synechocystis sp. (strain ATCC 27184 / PCC 6803 / Kazusa).